Here is an 881-residue protein sequence, read N- to C-terminus: Band 4.1-like protein 1 (881 aa).

N-acetylmethionine is present on Met1. The segment at 1-88 (MTTETGPDSE…TPSKAQKSPQ (88 aa)) is disordered. Residues 17 to 35 (EAPQQPEAAAAVTTPVTPA) show a composition bias toward low complexity. The residue at position 30 (Thr30) is a Phosphothreonine. Residues 38 to 50 (GHPEANSNEKHPS) show a composition bias toward basic and acidic residues. Ser75 bears the Phosphoserine mark. Residues 76-87 (ERTTPSKAQKSP) show a composition bias toward polar residues. Thr79 carries the phosphothreonine modification. The FERM domain occupies 97 to 378 (AICRVTLLDA…EHHTFFRLVS (282 aa)). Tyr343 is modified (phosphotyrosine). Residues Ser378, Ser430, and Ser437 each carry the phosphoserine modification. Positions 428 to 501 (SRSLDGAEFS…HKQEFLDKPE (74 aa)) are disordered. Residues 444–457 (ENHDAGPDGDKRDE) are compositionally biased toward basic and acidic residues. Residues Ser461 and Ser466 each carry the phosphoserine modification. A compositionally biased stretch (basic and acidic residues) spans 466-501 (SEAEEGEVRTPTKIKELKPEQETTPRHKQEFLDKPE). Thr475 carries the post-translational modification Phosphothreonine. The tract at residues 483-541 (KPEQETTPRHKQEFLDKPEDVLLKHQASINELKRTLKEPNSKLIHRDRDWERERRLPSS) is spectrin--actin-binding. Ser510 carries the post-translational modification Phosphoserine. Over residues 514–538 (LKRTLKEPNSKLIHRDRDWERERRL) the composition is skewed to basic and acidic residues. The segment at 514 to 596 (LKRTLKEPNS…QERDTVFLKD (83 aa)) is disordered. Phosphoserine occurs at positions 540, 541, 544, and 546. Residue Thr550 is modified to Phosphothreonine. The segment covering 550–577 (TPEKANERAGLREGSEEKVKPPRPRAPE) has biased composition (basic and acidic residues). 2 positions are modified to phosphoserine: Ser564 and Ser578. A Phosphothreonine modification is found at Thr580. Phosphoserine is present on residues Ser639, Ser648, Ser650, Ser667, Ser672, Ser678, and Ser685. The tract at residues 642 to 699 (ELDRDKSDSDTEGLLFSRDLNKGAPSQDDESGGIEDSPDRGACSTPDMPQFEPVKTET) is disordered. Thr686 carries the post-translational modification Phosphothreonine. Phosphoserine is present on residues Ser722, Ser784, and Ser870. The C-terminal (CTD) stretch occupies residues 746–881 (SITTETISTT…EERDKKPQES (136 aa)).

Interacts with AGAP2. Highest expression in brain, lower in heart, kidney, pancreas, placenta, lung and skeletal muscle.

The protein resides in the cytoplasm. Its subcellular location is the cytoskeleton. Its function is as follows. May function to confer stability and plasticity to neuronal membrane via multiple interactions, including the spectrin-actin-based cytoskeleton, integral membrane channels and membrane-associated guanylate kinases. The polypeptide is Band 4.1-like protein 1 (Homo sapiens (Human)).